The sequence spans 174 residues: Flavodoxin 1 (174 aa).

The Flavodoxin-like domain maps to 4 to 168 (IGIFYGSSSG…RLERWIAVLQ (165 aa)). FMN contacts are provided by residues 10–14 (SSSGV) and 89–122 (LFGAGDYVSHGEQFVSALGVLYDKFKARGAALVG).

It depends on FMN as a cofactor.

Flavodoxins are low-potential electron donors to a number of redox enzymes. AvFld 1 is able to donate electrons to the assimilatory nitrate reductase of A.vinelandii to catalyze the reduction of nitrate to nitrite. This chain is Flavodoxin 1, found in Azotobacter vinelandii (strain DJ / ATCC BAA-1303).